A 477-amino-acid polypeptide reads, in one-letter code: Histidine permease HisP (477 aa).

Helical transmembrane passes span 16 to 36 (ITMI…SGAT), 40 to 60 (AGPW…YFVM), 86 to 106 (PAFG…TIAV), 126 to 146 (IFSG…VGAF), 156 to 176 (IKVI…FGVL), 192 to 212 (HGFV…GFSF), 238 to 258 (SIFW…AAII), 284 to 304 (IGFA…VISS), 337 to 359 (IPFY…GIFG), 364 to 386 (LFLI…VSHI), 408 to 428 (WFPF…INLD), and 437 to 457 (WGEG…YFGY).

This sequence belongs to the amino acid-polyamine-organocation (APC) superfamily. Amino acid transporter (AAT) (TC 2.A.3.1) family.

The protein resides in the cell membrane. Involved in histidine uptake. Has low affinity for arginine and lysine. Plays no significant role in the excretion of accumulated histidine. The sequence is that of Histidine permease HisP from Lactococcus lactis subsp. cremoris (strain MG1363).